The sequence spans 71 residues: Dermaseptin-PT9 (71 aa).

Residues 1–22 (MAFLKKSLFLVLFLGLVSLSIC) form the signal peptide. Residues 23–43 (EEEKRENEMEQEDDEQSEMKR) constitute a propeptide that is removed on maturation. Valine 68 is subject to Valine amide. Positions 69–71 (GEQ) are excised as a propeptide.

The protein belongs to the frog skin active peptide (FSAP) family. Dermaseptin subfamily. As to expression, expressed by the skin glands.

The protein localises to the secreted. The protein resides in the target cell membrane. In terms of biological role, antimicrobial peptide with activity against fungi, Gram-positive and Gram-negative bacteria. Is active against S.aureus (MIC=16 uM), MRSA (MIC=32 uM), E.faecalis (MIC=16 uM), E.coli (MIC=8 uM), P.aeruginosa (MIC=16 uM), K.pneumoniae (MIC=8 uM), and C.albicans (MIC=64 uM). Also inhibits biofilm formation. Acts by disrupting cell membranes. Also exhibits anti-proliferative effect against various human cancer cells. Shows weak hemolytic activity towards horse erythrocytes. This chain is Dermaseptin-PT9, found in Phyllomedusa tarsius (Brownbelly leaf frog).